The sequence spans 86 residues: UPF0335 protein BR1752/BS1330_I1746 (86 aa).

This sequence belongs to the UPF0335 family.

The chain is UPF0335 protein BR1752/BS1330_I1746 from Brucella suis biovar 1 (strain 1330).